Consider the following 275-residue polypeptide: Elongation factor Ts (275 aa).

The tract at residues 80–83 is involved in Mg(2+) ion dislocation from EF-Tu; that stretch reads TDFV.

It belongs to the EF-Ts family.

The protein localises to the cytoplasm. In terms of biological role, associates with the EF-Tu.GDP complex and induces the exchange of GDP to GTP. It remains bound to the aminoacyl-tRNA.EF-Tu.GTP complex up to the GTP hydrolysis stage on the ribosome. The protein is Elongation factor Ts of Clavibacter michiganensis subsp. michiganensis (strain NCPPB 382).